We begin with the raw amino-acid sequence, 391 residues long: Ectodysplasin-A (391 aa).

A compositionally biased stretch (basic and acidic residues) spans 1-21 (MGYPEVERREPLPAAAPRERG). Residues 1 to 28 (MGYPEVERREPLPAAAPRERGSQGCGCR) form a disordered region. The Cytoplasmic portion of the chain corresponds to 1 to 41 (MGYPEVERREPLPAAAPRERGSQGCGCRGAPARAGEGNSCR). The helical; Signal-anchor for type II membrane protein transmembrane segment at 42–62 (LFLGFFGLSLALHLLTLCCYL) threads the bilayer. Topologically, residues 63 to 391 (ELRSELRRER…AIRLGEAPAS (329 aa)) are extracellular. Disordered regions lie at residues 72–129 (RGTE…DSQD) and 146–244 (YSEE…TGTR). A compositionally biased stretch (low complexity) spans 86 to 96 (TSGTLSSPGSL). The Collagen-like domain maps to 180–229 (GPPGPNGPPGPPGPPGPQGPPGIPGIPGIPGTTVMGPPGPPGPPGPQGPP). 2 stretches are compositionally biased toward pro residues: residues 181–203 (PPGP…PGIP) and 216–228 (PPGP…PQGP). A THD domain is found at 249–385 (AVVHLQGQGS…HTTFFGAIRL (137 aa)). A glycan (N-linked (GlcNAc...) asparagine) is linked at asparagine 313. Residues cysteine 332 and cysteine 346 are joined by a disulfide bond. Residue asparagine 372 is glycosylated (N-linked (GlcNAc...) asparagine).

This sequence belongs to the tumor necrosis factor family. Homotrimer. The homotrimers may then dimerize and form higher-order oligomers. In terms of processing, N-glycosylated. Post-translationally, processing by furin produces a secreted form.

It localises to the cell membrane. Its subcellular location is the secreted. In terms of biological role, cytokine which is involved in epithelial-mesenchymal signaling during morphogenesis of ectodermal organs. Functions as a ligand activating the DEATH-domain containing receptors EDAR and EDA2R. Isoform TAA binds only to the receptor EDAR, while isoform TA-A2 binds exclusively to the receptor EDA2R. May also play a role in cell adhesion. Isoform TAA binds only to the receptor EDAR, while isoform TA-A2 binds exclusively to the receptor EDA2R. Functionally, isoform TA-A2 binds exclusively to the receptor EDA2R. In Mus musculus (Mouse), this protein is Ectodysplasin-A (Eda).